The following is a 569-amino-acid chain: Proline--tRNA ligase (569 aa).

This sequence belongs to the class-II aminoacyl-tRNA synthetase family. ProS type 1 subfamily. In terms of assembly, homodimer.

The protein localises to the cytoplasm. It catalyses the reaction tRNA(Pro) + L-proline + ATP = L-prolyl-tRNA(Pro) + AMP + diphosphate. In terms of biological role, catalyzes the attachment of proline to tRNA(Pro) in a two-step reaction: proline is first activated by ATP to form Pro-AMP and then transferred to the acceptor end of tRNA(Pro). As ProRS can inadvertently accommodate and process non-cognate amino acids such as alanine and cysteine, to avoid such errors it has two additional distinct editing activities against alanine. One activity is designated as 'pretransfer' editing and involves the tRNA(Pro)-independent hydrolysis of activated Ala-AMP. The other activity is designated 'posttransfer' editing and involves deacylation of mischarged Ala-tRNA(Pro). The misacylated Cys-tRNA(Pro) is not edited by ProRS. In Shewanella loihica (strain ATCC BAA-1088 / PV-4), this protein is Proline--tRNA ligase.